A 354-amino-acid chain; its full sequence is DNA polymerase IV (354 aa).

Residues 14-198 enclose the UmuC domain; sequence IIHIDMDAFF…MDIAKFHGVG (185 aa). Positions 18 and 116 each coordinate Mg(2+). The active site involves Glu117.

This sequence belongs to the DNA polymerase type-Y family. As to quaternary structure, monomer. Mg(2+) serves as cofactor.

It localises to the cytoplasm. It carries out the reaction DNA(n) + a 2'-deoxyribonucleoside 5'-triphosphate = DNA(n+1) + diphosphate. In terms of biological role, poorly processive, error-prone DNA polymerase involved in untargeted mutagenesis. Copies undamaged DNA at stalled replication forks, which arise in vivo from mismatched or misaligned primer ends. These misaligned primers can be extended by PolIV. Exhibits no 3'-5' exonuclease (proofreading) activity. May be involved in translesional synthesis, in conjunction with the beta clamp from PolIII. This is DNA polymerase IV from Streptococcus sanguinis (strain SK36).